The chain runs to 235 residues: Elongation factor Tu, chloroplastic (235 aa).

Residues 1-125 form the tr-type G domain; the sequence is KNMITGAAQM…AVDEYIPTPV (125 aa). Residue 47 to 50 coordinates GTP; it reads NKQD.

This sequence belongs to the TRAFAC class translation factor GTPase superfamily. Classic translation factor GTPase family. EF-Tu/EF-1A subfamily.

Its subcellular location is the plastid. It localises to the chloroplast. The catalysed reaction is GTP + H2O = GDP + phosphate + H(+). Its function is as follows. GTP hydrolase that promotes the GTP-dependent binding of aminoacyl-tRNA to the A-site of ribosomes during protein biosynthesis. In Gracilariopsis lemaneiformis (Red alga), this protein is Elongation factor Tu, chloroplastic (tufA).